The primary structure comprises 145 residues: Large ribosomal subunit protein uL11 (145 aa).

This sequence belongs to the universal ribosomal protein uL11 family. In terms of assembly, part of the ribosomal stalk of the 50S ribosomal subunit. Interacts with L10 and the large rRNA to form the base of the stalk. L10 forms an elongated spine to which L12 dimers bind in a sequential fashion forming a multimeric L10(L12)X complex. In terms of processing, one or more lysine residues are methylated.

In terms of biological role, forms part of the ribosomal stalk which helps the ribosome interact with GTP-bound translation factors. The protein is Large ribosomal subunit protein uL11 of Coxiella burnetii (strain Dugway 5J108-111).